Reading from the N-terminus, the 387-residue chain is Succinate--CoA ligase [ADP-forming] subunit beta (387 aa).

One can recognise an ATP-grasp domain in the interval 9-245; that stretch reads KDLLESYGLK…KSQENAKELK (237 aa). Residues Lys-46, 53–55, Glu-100, Tyr-103, and Glu-108 each bind ATP; that span reads GRG. Residues Asn-200 and Asp-214 each contribute to the Mg(2+) site. Substrate-binding positions include Asn-265 and 322–324; that span reads GIV.

This sequence belongs to the succinate/malate CoA ligase beta subunit family. In terms of assembly, heterotetramer of two alpha and two beta subunits. Requires Mg(2+) as cofactor.

It catalyses the reaction succinate + ATP + CoA = succinyl-CoA + ADP + phosphate. The catalysed reaction is GTP + succinate + CoA = succinyl-CoA + GDP + phosphate. The protein operates within carbohydrate metabolism; tricarboxylic acid cycle; succinate from succinyl-CoA (ligase route): step 1/1. Succinyl-CoA synthetase functions in the citric acid cycle (TCA), coupling the hydrolysis of succinyl-CoA to the synthesis of either ATP or GTP and thus represents the only step of substrate-level phosphorylation in the TCA. The beta subunit provides nucleotide specificity of the enzyme and binds the substrate succinate, while the binding sites for coenzyme A and phosphate are found in the alpha subunit. The protein is Succinate--CoA ligase [ADP-forming] subunit beta of Francisella tularensis subsp. holarctica (strain OSU18).